We begin with the raw amino-acid sequence, 127 residues long: Snaclec bothroinsularin subunit beta (127 aa).

Intrachain disulfides connect Cys-2–Cys-13, Cys-30–Cys-123, and Cys-100–Cys-115. The C-type lectin domain maps to 9-124; that stretch reads YEGSCYRVFE…CTKLEYFVCE (116 aa).

It belongs to the snaclec family. Heterodimer of subunits alpha and beta; disulfide-linked. As to expression, expressed by the venom gland.

It localises to the secreted. In terms of biological role, thrombin and prothrombin (F2) inhibitor. The IC(50) of thrombin-induced platelet aggregation and fibrinocoagulation is 62 and 35 nM, respectively. Its inhibitory activity is at least 10-fold lower than that observed for other thrombin inhibitors. This Bothrops insularis (Golden lancehead) protein is Snaclec bothroinsularin subunit beta.